A 216-amino-acid polypeptide reads, in one-letter code: Holliday junction branch migration complex subunit RuvA (216 aa).

Positions 1–64 (MISFIKGVLI…EDAQQLYGFK (64 aa)) are domain I. The tract at residues 65–143 (SKVDKKVFQE…KMANEIYAQT (79 aa)) is domain II. The flexible linker stretch occupies residues 144–163 (SGTTTTSQDSQAQQAPTSVV). The domain III stretch occupies residues 164 to 216 (LANSIFNESVDALLALGYKQKDAEKMARSAMGDATTAAEVIRKALQGSIKSKR).

Belongs to the RuvA family. Homotetramer. Forms an RuvA(8)-RuvB(12)-Holliday junction (HJ) complex. HJ DNA is sandwiched between 2 RuvA tetramers; dsDNA enters through RuvA and exits via RuvB. An RuvB hexamer assembles on each DNA strand where it exits the tetramer. Each RuvB hexamer is contacted by two RuvA subunits (via domain III) on 2 adjacent RuvB subunits; this complex drives branch migration. In the full resolvosome a probable DNA-RuvA(4)-RuvB(12)-RuvC(2) complex forms which resolves the HJ.

It is found in the cytoplasm. In terms of biological role, the RuvA-RuvB-RuvC complex processes Holliday junction (HJ) DNA during genetic recombination and DNA repair, while the RuvA-RuvB complex plays an important role in the rescue of blocked DNA replication forks via replication fork reversal (RFR). RuvA specifically binds to HJ cruciform DNA, conferring on it an open structure. The RuvB hexamer acts as an ATP-dependent pump, pulling dsDNA into and through the RuvAB complex. HJ branch migration allows RuvC to scan DNA until it finds its consensus sequence, where it cleaves and resolves the cruciform DNA. This Francisella tularensis subsp. mediasiatica (strain FSC147) protein is Holliday junction branch migration complex subunit RuvA.